A 282-amino-acid chain; its full sequence is Aldo-keto reductase MUL_1987 (282 aa).

Tyr57 (proton donor) is an active-site residue. Leu197, Ile235, Ser238, Thr246, Asn247, and Arg273 together coordinate NADPH.

Belongs to the aldo/keto reductase family.

In Mycobacterium ulcerans (strain Agy99), this protein is Aldo-keto reductase MUL_1987.